A 198-amino-acid polypeptide reads, in one-letter code: MLYPTPIAKLIDSYSKLPGIGIKTATRLAFYTIGMEDDVVNEFAKNLLAAKRDLSYCSICGNLTDQDPCAICQDSTRDQSTILIVEDSRDVTALENIQEYHGLYHVLHGLISPMNGIGPDDINLKTLLTRLMENEVTEVIVATNATADGEATSMYISRVLKPAGIKVTRLARGLAVGSDIEYADEVTLLRAIENRTEL.

The C4-type zinc finger occupies 57 to 72 (CSICGNLTDQDPCAIC). The 96-residue stretch at 80 to 175 (STILIVEDSR…KVTRLARGLA (96 aa)) folds into the Toprim domain.

It belongs to the RecR family.

Functionally, may play a role in DNA repair. It seems to be involved in an RecBC-independent recombinational process of DNA repair. It may act with RecF and RecO. The chain is Recombination protein RecR from Streptococcus suis (strain 05ZYH33).